The following is a 483-amino-acid chain: Glutathione reductase (483 aa).

Residue Met-1 is modified to N-acetylmethionine. Leu-2 is modified (N-acetylserine). FAD is bound by residues Ser-33 and Gly-34. Ser-33 lines the glutathione pocket. Arg-40 contributes to the glutathione binding site. FAD-binding residues include Glu-53, Thr-60, Cys-61, and Lys-69. Cys-61 and Cys-66 are oxidised to a cystine. Glutathione is bound at residue Tyr-123. Ala-139 serves as a coordination point for FAD. NADP(+) is bound by residues Ala-205, Ile-208, Glu-211, Arg-228, and Arg-234. Thr-243 is a glutathione binding site. Residue Asn-278 is glycosylated (N-linked (GlcNAc...) asparagine). Gly-294 provides a ligand contact to NADP(+). An FAD-binding site is contributed by Asp-334. Glu-340 is an NADP(+) binding site. Thr-342 contributes to the FAD binding site. Arg-350 contributes to the glutathione binding site. Val-375 is a binding site for NADP(+). Lys-425 lines the glutathione pocket. His-472 is a binding site for FAD. His-472 acts as the Proton acceptor in catalysis.

Belongs to the class-I pyridine nucleotide-disulfide oxidoreductase family. In terms of assembly, homodimer. FAD serves as cofactor.

The protein localises to the cytoplasm. It is found in the nucleus. The protein resides in the mitochondrion. It localises to the peroxisome. It carries out the reaction 2 glutathione + NADP(+) = glutathione disulfide + NADPH + H(+). Catalyzes the reduction of glutathione disulfide (GSSG) to reduced glutathione (GSH). Constitutes the major mechanism to maintain a high GSH:GSSG ratio in the cytosol. This is Glutathione reductase from Saccharomyces cerevisiae (strain ATCC 204508 / S288c) (Baker's yeast).